A 197-amino-acid polypeptide reads, in one-letter code: Probable adenylyl-sulfate kinase (197 aa).

ATP is bound at residue 33–40; the sequence is GLSGSGKS. The active-site Phosphoserine intermediate is the Ser-107.

It belongs to the APS kinase family.

The enzyme catalyses adenosine 5'-phosphosulfate + ATP = 3'-phosphoadenylyl sulfate + ADP + H(+). Its pathway is sulfur metabolism; hydrogen sulfide biosynthesis; sulfite from sulfate: step 2/3. Catalyzes the synthesis of activated sulfate. This chain is Probable adenylyl-sulfate kinase (cysC), found in Bacillus subtilis (strain 168).